An 89-amino-acid chain; its full sequence is Large ribosomal subunit protein eL31 (89 aa).

The protein belongs to the eukaryotic ribosomal protein eL31 family.

This chain is Large ribosomal subunit protein eL31 (rpl31e), found in Thermoplasma acidophilum (strain ATCC 25905 / DSM 1728 / JCM 9062 / NBRC 15155 / AMRC-C165).